The sequence spans 430 residues: MSVLIRGVRPYGEGERVDVLVDDGQIAQIGPDLAIPDTADVIDATGHVLLPGFVDLHTHLREPGREYAEDIETGSAAAALGGYTAVFAMANTNPVADSPVVTDHVWHRGQQVGLVDVHPVGAVTVGLAGAELTEMGMMNAGAAQVRMFSDDGVCVHDPLIMRRALEYATGLGVLIAQHAEEPRLTVGAVAHEGPMAARLGLAGWPRAAEESIVARDALLARDAGARVHICHASAAGTVEILKWAKDQGISITAEVTPHHLLLDDARLASYDGVNRVNPPLREASDAVALRQALADGIIDCVATDHAPHAEHEKCVEFAAARPGMLGLQTALSVVVQTMVAPGLLSWRDIARVMSENPACIARLPDQGRPLEVGEPANLTVVDPDATWTVTGADLASRSANTPFESMSLPATVTATLLRGKVTARDGKIRA.

Residues His-57 and His-59 each contribute to the Zn(2+) site. Substrate-binding positions include 59–61 (HLR) and Asn-91. Residues Asp-151, His-178, and His-231 each contribute to the Zn(2+) site. A substrate-binding site is contributed by Asn-277. Residue Asp-304 participates in Zn(2+) binding. The active site involves Asp-304. Residues His-308 and 322–323 (PG) each bind substrate.

Belongs to the metallo-dependent hydrolases superfamily. DHOase family. Class I DHOase subfamily. Requires Zn(2+) as cofactor.

It carries out the reaction (S)-dihydroorotate + H2O = N-carbamoyl-L-aspartate + H(+). Its pathway is pyrimidine metabolism; UMP biosynthesis via de novo pathway; (S)-dihydroorotate from bicarbonate: step 3/3. Its function is as follows. Catalyzes the reversible cyclization of carbamoyl aspartate to dihydroorotate. In Mycobacterium tuberculosis (strain ATCC 25618 / H37Rv), this protein is Dihydroorotase.